The sequence spans 123 residues: Beta-2-microglobulin (123 aa).

The N-terminal stretch at 1–21 (MSRLFLFALLGHLCFLPYLDA) is a signal peptide. The 90-residue stretch at 29-118 (PRVQVYSRYP…STLNEPKVVK (90 aa)) folds into the Ig-like C1-type domain. C49 and C104 are disulfide-bonded.

It belongs to the beta-2-microglobulin family. In terms of assembly, heterodimer of an alpha chain and a beta chain. Beta-2-microglobulin is the beta-chain of major histocompatibility complex class I molecules.

It is found in the secreted. In terms of biological role, component of the class I major histocompatibility complex (MHC). Involved in the presentation of peptide antigens to the immune system. The sequence is that of Beta-2-microglobulin (B2M) from Monodelphis domestica (Gray short-tailed opossum).